Consider the following 155-residue polypeptide: Endoribonuclease YbeY (155 aa).

Zn(2+) contacts are provided by His118, His122, and His128.

Belongs to the endoribonuclease YbeY family. The cofactor is Zn(2+).

It is found in the cytoplasm. Single strand-specific metallo-endoribonuclease involved in late-stage 70S ribosome quality control and in maturation of the 3' terminus of the 16S rRNA. The chain is Endoribonuclease YbeY from Bordetella petrii (strain ATCC BAA-461 / DSM 12804 / CCUG 43448).